A 389-amino-acid polypeptide reads, in one-letter code: Nuclear receptor subfamily 2 group F member 1-B (389 aa).

Residues Asp19–Glu39 are disordered. Residues His51–Arg126 constitute a DNA-binding region (nuclear receptor). 2 consecutive NR C4-type zinc fingers follow at residues Cys54–Cys74 and Cys90–Cys109. The NR LBD domain occupies Tyr152 to Gly378.

It belongs to the nuclear hormone receptor family. NR2 subfamily. Expressed the retina, where expression is restricted to the outer nuclear layer.

Its subcellular location is the nucleus. Putative transcription factor that is required in photoreceptor cells precursors during eye development. This chain is Nuclear receptor subfamily 2 group F member 1-B, found in Danio rerio (Zebrafish).